The sequence spans 661 residues: UvrABC system protein B (661 aa).

Residues 25 to 178 (EGILKGEKFQ…DEVIRDLIRM (154 aa)) enclose the Helicase ATP-binding domain. 38–45 (GVTGSGKT) provides a ligand contact to ATP. A Beta-hairpin motif is present at residues 91-114 (YYDYYQPEAYIPETDTYIEKDSSI). The 163-residue stretch at 429 to 591 (QIDHLIGEIR…IVPQTVRKGI (163 aa)) folds into the Helicase C-terminal domain. The UVR domain occupies 625–660 (EEYIKELEQEMKKLAIELEFEKAAKVRDKIFELKKL).

The protein belongs to the UvrB family. In terms of assembly, forms a heterotetramer with UvrA during the search for lesions. Interacts with UvrC in an incision complex.

It is found in the cytoplasm. The UvrABC repair system catalyzes the recognition and processing of DNA lesions. A damage recognition complex composed of 2 UvrA and 2 UvrB subunits scans DNA for abnormalities. Upon binding of the UvrA(2)B(2) complex to a putative damaged site, the DNA wraps around one UvrB monomer. DNA wrap is dependent on ATP binding by UvrB and probably causes local melting of the DNA helix, facilitating insertion of UvrB beta-hairpin between the DNA strands. Then UvrB probes one DNA strand for the presence of a lesion. If a lesion is found the UvrA subunits dissociate and the UvrB-DNA preincision complex is formed. This complex is subsequently bound by UvrC and the second UvrB is released. If no lesion is found, the DNA wraps around the other UvrB subunit that will check the other stand for damage. This Caldicellulosiruptor bescii (strain ATCC BAA-1888 / DSM 6725 / KCTC 15123 / Z-1320) (Anaerocellum thermophilum) protein is UvrABC system protein B.